The sequence spans 547 residues: Chaperonin GroEL (547 aa).

Residues 30–33, Lys51, 87–91, Gly415, 479–481, and Asp495 each bind ATP; these read TLGP, DGTTT, and NAA.

The protein belongs to the chaperonin (HSP60) family. Forms a cylinder of 14 subunits composed of two heptameric rings stacked back-to-back. Interacts with the co-chaperonin GroES.

The protein localises to the cytoplasm. The enzyme catalyses ATP + H2O + a folded polypeptide = ADP + phosphate + an unfolded polypeptide.. In terms of biological role, together with its co-chaperonin GroES, plays an essential role in assisting protein folding. The GroEL-GroES system forms a nano-cage that allows encapsulation of the non-native substrate proteins and provides a physical environment optimized to promote and accelerate protein folding. The protein is Chaperonin GroEL of Delftia acidovorans (strain DSM 14801 / SPH-1).